The following is a 396-amino-acid chain: Phosphoglycerate kinase (396 aa).

Substrate contacts are provided by residues 21-23 (DFN), Arg-36, 59-62 (HLGK), Arg-119, and Arg-156. Residues Lys-206, Gly-294, Glu-325, and 352-355 (GGDS) each bind ATP.

The protein belongs to the phosphoglycerate kinase family. In terms of assembly, monomer.

The protein resides in the cytoplasm. It carries out the reaction (2R)-3-phosphoglycerate + ATP = (2R)-3-phospho-glyceroyl phosphate + ADP. It functions in the pathway carbohydrate degradation; glycolysis; pyruvate from D-glyceraldehyde 3-phosphate: step 2/5. The chain is Phosphoglycerate kinase from Listeria innocua serovar 6a (strain ATCC BAA-680 / CLIP 11262).